A 209-amino-acid chain; its full sequence is C-type lectin domain family 6 member A (209 aa).

Over 1 to 20 (MVQERHPQRKGVCWTLRLWS) the chain is Cytoplasmic. Residues 21 to 43 (TAVISMLLLSTCFIASCMVTYQF) traverse the membrane as a helical; Signal-anchor for type II membrane protein segment. The Extracellular segment spans residues 44 to 209 (TMEKPNRRLS…SICETKKIYL (166 aa)). 2 disulfides stabilise this stretch: C64–C78 and C79–C90. The C-type lectin domain occupies 86 to 203 (FGSSCYLIST…CDSKHNSICE (118 aa)). Ca(2+) contacts are provided by V116, N118, and E122. The N-linked (GlcNAc...) asparagine glycan is linked to N131. 3 residues coordinate Ca(2+): E168, N170, and E174. Alpha-D-mannopyranose is bound by residues 168–170 (EPN), E174, W182, and 190–191 (ND). The cysteines at positions 176 and 194 are disulfide-linked. Ca(2+) is bound by residues N190, D191, and E203.

In terms of assembly, associated with FCER1G. Heterodimer with CLEC4D; this heterodimer forms a pattern recognition receptor (PRR) against fungal infection.

It is found in the cell membrane. Calcium-dependent lectin that acts as a pattern recognition receptor (PRR) of the innate immune system: specifically recognizes and binds alpha-mannans on C.albicans hypheas. Binding of C.albicans alpha-mannans to this receptor complex leads to phosphorylation of the immunoreceptor tyrosine-based activation motif (ITAM) of FCER1G, triggering activation of SYK, CARD9 and NF-kappa-B, consequently driving maturation of antigen-presenting cells and shaping antigen-specific priming of T-cells toward effector T-helper 1 and T-helper 17 cell subtypes. Also recognizes, in a mannose-dependent manner, allergens from house dust mite and fungi, by promoting cysteinyl leukotriene production. Recognizes soluble elements from the eggs of Shistosoma mansoni altering adaptive immune responses. The protein is C-type lectin domain family 6 member A (CLEC6A) of Rattus norvegicus (Rat).